A 247-amino-acid chain; its full sequence is MHPLLILAFVGAAVAFPSDDDDKIVGGYTCAENSVPYQVSLNAGYHFCGGSLINDQWVVSAAHCYQYHIQVRLGEYNIDVLEGGEQFIDASKIIRHPKYSSWTLDNDILLIKLSTPAVINARVSTLLLPSACASAGTECLISGWGNTLSSGVNYPDLLQCLVAPLLSHADCEASYPGQITNNMICAGFLEGGKDSCQGDSGGPVACNGQLQGIVSWGYGCAQKGKPGVYTKVCNYVDWIQETIAANS.

The N-terminal stretch at 1-15 is a signal peptide; sequence MHPLLILAFVGAAVA. Residues 16–23 constitute a propeptide, activation peptide; that stretch reads FPSDDDDK. Positions 24–244 constitute a Peptidase S1 domain; sequence IVGGYTCAEN…YVDWIQETIA (221 aa). 6 cysteine pairs are disulfide-bonded: C30–C160, C48–C64, C132–C233, C139–C206, C171–C185, and C196–C220. H63 acts as the Charge relay system in catalysis. Ca(2+) is bound by residues E75, N77, V80, and E85. The active-site Charge relay system is D107. S200 (charge relay system) is an active-site residue.

It belongs to the peptidase S1 family. It depends on Ca(2+) as a cofactor. In terms of processing, not sulfated on tyrosine residue(s).

It is found in the secreted. The protein localises to the extracellular space. It carries out the reaction Preferential cleavage: Arg-|-Xaa, Lys-|-Xaa.. This is Anionic trypsin from Bos taurus (Bovine).